The chain runs to 341 residues: Holliday junction branch migration complex subunit RuvB (341 aa).

Positions 1–180 (MAKSHTLNPE…FGIQLRLDYY (180 aa)) are large ATPase domain (RuvB-L). The ATP site is built by leucine 19, arginine 20, glycine 61, lysine 64, threonine 65, threonine 66, arginine 170, tyrosine 180, and arginine 217. Position 65 (threonine 65) interacts with Mg(2+). Residues 181 to 251 (NDEEMKEIVL…LCLKAFEKMG (71 aa)) form a small ATPAse domain (RuvB-S) region. The tract at residues 254–341 (DLGLDGMDRQ…ENHGQDPTLF (88 aa)) is head domain (RuvB-H). Residues arginine 309 and arginine 314 each coordinate DNA.

Belongs to the RuvB family. In terms of assembly, homohexamer. Forms an RuvA(8)-RuvB(12)-Holliday junction (HJ) complex. HJ DNA is sandwiched between 2 RuvA tetramers; dsDNA enters through RuvA and exits via RuvB. An RuvB hexamer assembles on each DNA strand where it exits the tetramer. Each RuvB hexamer is contacted by two RuvA subunits (via domain III) on 2 adjacent RuvB subunits; this complex drives branch migration. In the full resolvosome a probable DNA-RuvA(4)-RuvB(12)-RuvC(2) complex forms which resolves the HJ.

The protein resides in the cytoplasm. It carries out the reaction ATP + H2O = ADP + phosphate + H(+). In terms of biological role, the RuvA-RuvB-RuvC complex processes Holliday junction (HJ) DNA during genetic recombination and DNA repair, while the RuvA-RuvB complex plays an important role in the rescue of blocked DNA replication forks via replication fork reversal (RFR). RuvA specifically binds to HJ cruciform DNA, conferring on it an open structure. The RuvB hexamer acts as an ATP-dependent pump, pulling dsDNA into and through the RuvAB complex. RuvB forms 2 homohexamers on either side of HJ DNA bound by 1 or 2 RuvA tetramers; 4 subunits per hexamer contact DNA at a time. Coordinated motions by a converter formed by DNA-disengaged RuvB subunits stimulates ATP hydrolysis and nucleotide exchange. Immobilization of the converter enables RuvB to convert the ATP-contained energy into a lever motion, pulling 2 nucleotides of DNA out of the RuvA tetramer per ATP hydrolyzed, thus driving DNA branch migration. The RuvB motors rotate together with the DNA substrate, which together with the progressing nucleotide cycle form the mechanistic basis for DNA recombination by continuous HJ branch migration. Branch migration allows RuvC to scan DNA until it finds its consensus sequence, where it cleaves and resolves cruciform DNA. The sequence is that of Holliday junction branch migration complex subunit RuvB from Leptospira borgpetersenii serovar Hardjo-bovis (strain L550).